The primary structure comprises 121 residues: UPF0344 protein BC_1150 (121 aa).

4 helical membrane-spanning segments follow: residues 6–26 (ITAW…YSAG), 38–58 (LMYI…VKTA), 65–85 (WYGL…MVLV), and 92–112 (PTGA…YLGL).

Belongs to the UPF0344 family.

It localises to the cell membrane. The polypeptide is UPF0344 protein BC_1150 (Bacillus cereus (strain ATCC 14579 / DSM 31 / CCUG 7414 / JCM 2152 / NBRC 15305 / NCIMB 9373 / NCTC 2599 / NRRL B-3711)).